The primary structure comprises 382 residues: Galactokinase (382 aa).

34–37 (EHTD) is a substrate binding site. ATP is bound at residue 124-130 (GAGLSSS). Residues Ser-130 and Glu-162 each coordinate Mg(2+). The active-site Proton acceptor is the Asp-174. Tyr-223 provides a ligand contact to substrate.

It belongs to the GHMP kinase family. GalK subfamily.

The protein resides in the cytoplasm. It carries out the reaction alpha-D-galactose + ATP = alpha-D-galactose 1-phosphate + ADP + H(+). It functions in the pathway carbohydrate metabolism; galactose metabolism. Catalyzes the transfer of the gamma-phosphate of ATP to D-galactose to form alpha-D-galactose-1-phosphate (Gal-1-P). The sequence is that of Galactokinase from Escherichia fergusonii (strain ATCC 35469 / DSM 13698 / CCUG 18766 / IAM 14443 / JCM 21226 / LMG 7866 / NBRC 102419 / NCTC 12128 / CDC 0568-73).